We begin with the raw amino-acid sequence, 712 residues long: Polyphosphate kinase (712 aa).

N49 provides a ligand contact to ATP. Positions 398 and 428 each coordinate Mg(2+). H458 serves as the catalytic Phosphohistidine intermediate. 3 residues coordinate ATP: Y491, R587, and H615.

Belongs to the polyphosphate kinase 1 (PPK1) family. It depends on Mg(2+) as a cofactor. Post-translationally, an intermediate of this reaction is the autophosphorylated ppk in which a phosphate is covalently linked to a histidine residue through a N-P bond.

It carries out the reaction [phosphate](n) + ATP = [phosphate](n+1) + ADP. In terms of biological role, catalyzes the reversible transfer of the terminal phosphate of ATP to form a long-chain polyphosphate (polyP). The chain is Polyphosphate kinase from Prochlorococcus marinus (strain MIT 9313).